The primary structure comprises 187 residues: GTP cyclohydrolase 1 (187 aa).

Residues Cys-76, His-79, and Cys-148 each contribute to the Zn(2+) site.

The protein belongs to the GTP cyclohydrolase I family. In terms of assembly, homomer.

The catalysed reaction is GTP + H2O = 7,8-dihydroneopterin 3'-triphosphate + formate + H(+). The protein operates within cofactor biosynthesis; 7,8-dihydroneopterin triphosphate biosynthesis; 7,8-dihydroneopterin triphosphate from GTP: step 1/1. This Desulforamulus reducens (strain ATCC BAA-1160 / DSM 100696 / MI-1) (Desulfotomaculum reducens) protein is GTP cyclohydrolase 1.